The following is a 236-amino-acid chain: Ribonuclease 3 (236 aa).

Positions 7-136 constitute an RNase III domain; the sequence is KSYILKKFNI…FIGALYLDQG (130 aa). E49 contributes to the Mg(2+) binding site. Residue D53 is part of the active site. Mg(2+) is bound by residues D122 and E125. Residue E125 is part of the active site. A DRBM domain is found at 162-232; it reads DFKSRLQERL…ARAALKILED (71 aa).

It belongs to the ribonuclease III family. As to quaternary structure, homodimer. Requires Mg(2+) as cofactor.

The protein resides in the cytoplasm. The enzyme catalyses Endonucleolytic cleavage to 5'-phosphomonoester.. Digests double-stranded RNA. Involved in the processing of primary rRNA transcript to yield the immediate precursors to the large and small rRNAs (23S and 16S). Processes some mRNAs, and tRNAs when they are encoded in the rRNA operon. Processes pre-crRNA and tracrRNA of type II CRISPR loci if present in the organism. The chain is Ribonuclease 3 from Leuconostoc mesenteroides subsp. mesenteroides (strain ATCC 8293 / DSM 20343 / BCRC 11652 / CCM 1803 / JCM 6124 / NCDO 523 / NBRC 100496 / NCIMB 8023 / NCTC 12954 / NRRL B-1118 / 37Y).